A 103-amino-acid chain; its full sequence is Histone H4 (103 aa).

A compositionally biased stretch (gly residues) spans 1–14 (MSGRGKGGKGLGKG). Residues 1–20 (MSGRGKGGKGLGKGGAKRHR) are disordered. Position 2 is an N-acetylserine (Ser-2). Lys-17 carries the N6-acetyllysine modification. The DNA-binding element occupies 17-21 (KRHRR). Position 80 is an N6-methylated lysine (Lys-80).

This sequence belongs to the histone H4 family. In terms of assembly, the nucleosome is a histone octamer containing two molecules each of H2A, H2B, H3 and H4 assembled in one H3-H4 heterotetramer and two H2A-H2B heterodimers. The octamer wraps approximately 147 bp of DNA.

It is found in the nucleus. Its subcellular location is the chromosome. In terms of biological role, core component of nucleosome. Nucleosomes wrap and compact DNA into chromatin, limiting DNA accessibility to the cellular machineries which require DNA as a template. Histones thereby play a central role in transcription regulation, DNA repair, DNA replication and chromosomal stability. DNA accessibility is regulated via a complex set of post-translational modifications of histones, also called histone code, and nucleosome remodeling. In Olisthodiscus luteus (Marine phytoflagellate), this protein is Histone H4.